A 119-amino-acid polypeptide reads, in one-letter code: UPF0102 protein Nther_1376 (119 aa).

Belongs to the UPF0102 family.

In Natranaerobius thermophilus (strain ATCC BAA-1301 / DSM 18059 / JW/NM-WN-LF), this protein is UPF0102 protein Nther_1376.